Here is a 275-residue protein sequence, read N- to C-terminus: Undecaprenyl-diphosphatase (275 aa).

The next 8 membrane-spanning stretches (helical) occupy residues 2–22 (LDIF…FLPI), 43–63 (FTDM…VVLY), 83–103 (WVLW…GLPL), 111–131 (LMNW…FIVI), 147–167 (TLPY…LIPG), 186–206 (YVAT…ASLL), 221–241 (LQGA…YLSI), and 255–275 (AFGW…TLIH).

It belongs to the UppP family.

It localises to the cell membrane. The enzyme catalyses di-trans,octa-cis-undecaprenyl diphosphate + H2O = di-trans,octa-cis-undecaprenyl phosphate + phosphate + H(+). Functionally, catalyzes the dephosphorylation of undecaprenyl diphosphate (UPP). Confers resistance to bacitracin. The chain is Undecaprenyl-diphosphatase from Lactiplantibacillus plantarum (strain ATCC BAA-793 / NCIMB 8826 / WCFS1) (Lactobacillus plantarum).